Reading from the N-terminus, the 107-residue chain is Iron-sulfur cluster assembly protein CyaY (107 aa).

The protein belongs to the frataxin family.

Involved in iron-sulfur (Fe-S) cluster assembly. May act as a regulator of Fe-S biogenesis. The sequence is that of Iron-sulfur cluster assembly protein CyaY from Enterobacter sp. (strain 638).